Here is a 367-residue protein sequence, read N- to C-terminus: Serine/threonine-protein phosphatase 2A activator 2 (367 aa).

It belongs to the PTPA-type PPIase family.

It localises to the cytoplasm. It carries out the reaction [protein]-peptidylproline (omega=180) = [protein]-peptidylproline (omega=0). In terms of biological role, PPIases accelerate the folding of proteins. It catalyzes the cis-trans isomerization of proline imidic peptide bonds in oligopeptides. Acts as a regulatory subunit for PP2A-like phosphatases modulating their activity or substrate specificity, probably by inducing a conformational change in the catalytic subunit, a direct target of the PPIase. Can reactivate inactive phosphatase PP2A-phosphatase methylesterase complexes (PP2Ai) in presence of ATP and Mg(2+) by dissociating the inactive form from the complex. This Debaryomyces hansenii (strain ATCC 36239 / CBS 767 / BCRC 21394 / JCM 1990 / NBRC 0083 / IGC 2968) (Yeast) protein is Serine/threonine-protein phosphatase 2A activator 2 (RRD2).